Reading from the N-terminus, the 446-residue chain is Questin oxidase (446 aa).

The protein belongs to the questin oxidase family.

It catalyses the reaction questin + NADPH + O2 = demethylsulochrin + NADP(+). Its pathway is secondary metabolite biosynthesis. Its function is as follows. Questin oxidase; part of the gene cluster that mediates the biosynthesis of geodin, an intermediate in the biosynthesis of other natural products. The pathway begins with the synthesis of atrochrysone thioester by the polyketide synthase (PKS) gedC. The atrochrysone carboxyl ACP thioesterase gedB then breaks the thioester bond and releases the atrochrysone carboxylic acid from gedC. The atrochrysone carboxylic acid is then converted to atrochrysone which is further transformed into emodinanthrone. The next step is performed by the emodinanthrone oxygenase gedH that catalyzes the oxidation of emodinanthrone to emodin. Emodin O-methyltransferase encoded probably by gedA then catalyzes methylation of the 8-hydroxy group of emodin to form questin. Ring cleavage of questin by questin oxidase gedK leads to desmethylsulochrin via several intermediates including questin epoxide. Another methylation step probably catalyzed by methyltransferase gedG leads to the formation of sulochrin which is further converted to dihydrogeodin by the sulochrin halogenase gedL. Finally, the dihydrogeodin oxidase gedJ catalyzes the stereospecific phenol oxidative coupling reaction converting dihydrogeodin to geodin. In Aspergillus terreus (strain NIH 2624 / FGSC A1156), this protein is Questin oxidase.